We begin with the raw amino-acid sequence, 163 residues long: Superoxide dismutase [Mn] (163 aa).

The Mn(2+) site is built by histidine 2, histidine 50, aspartate 134, and histidine 138.

Belongs to the iron/manganese superoxide dismutase family. Requires Mn(2+) as cofactor.

The catalysed reaction is 2 superoxide + 2 H(+) = H2O2 + O2. Its function is as follows. Destroys superoxide anion radicals which are normally produced within the cells and which are toxic to biological systems. The polypeptide is Superoxide dismutase [Mn] (sodA) (Mycobacterium scrofulaceum).